A 469-amino-acid polypeptide reads, in one-letter code: DNA-binding transcriptional regulator NtrC (469 aa).

Residues 5 to 119 (IVWVVDDDSS…EAVALVERAI (115 aa)) form the Response regulatory domain. Asp54 carries the post-translational modification 4-aspartylphosphate. One can recognise a Sigma-54 factor interaction domain in the interval 140–369 (MIGEAPAMQD…LENTCRWLTV (230 aa)). Residues 168–175 (GESGTGKE) and 231–240 (ADGGTLFLDE) each bind ATP. Residues 445 to 464 (KQEAARLLGWGRNTLTRKLK) constitute a DNA-binding region (H-T-H motif).

Phosphorylated and dephosphorylated by NtrB.

The protein localises to the cytoplasm. Its function is as follows. Member of the two-component regulatory system NtrB/NtrC, which controls expression of the nitrogen-regulated (ntr) genes in response to nitrogen limitation. Phosphorylated NtrC binds directly to DNA and stimulates the formation of open promoter-sigma54-RNA polymerase complexes. The protein is DNA-binding transcriptional regulator NtrC (glnG) of Salmonella typhimurium (strain LT2 / SGSC1412 / ATCC 700720).